The chain runs to 471 residues: 3-isopropylmalate dehydratase large subunit (471 aa).

3 residues coordinate [4Fe-4S] cluster: Cys347, Cys407, and Cys410.

It belongs to the aconitase/IPM isomerase family. LeuC type 1 subfamily. In terms of assembly, heterodimer of LeuC and LeuD. [4Fe-4S] cluster serves as cofactor.

The enzyme catalyses (2R,3S)-3-isopropylmalate = (2S)-2-isopropylmalate. The protein operates within amino-acid biosynthesis; L-leucine biosynthesis; L-leucine from 3-methyl-2-oxobutanoate: step 2/4. Catalyzes the isomerization between 2-isopropylmalate and 3-isopropylmalate, via the formation of 2-isopropylmaleate. This chain is 3-isopropylmalate dehydratase large subunit, found in Prochlorococcus marinus (strain MIT 9211).